A 217-amino-acid polypeptide reads, in one-letter code: MIGKLTGILDSVFEDHIILDVQGVGYVVFLSNRLLSSLPERGQAVSLFIETHVREDAIRLFGFETKVEQDWFCLLQNVRGVGAKVALAILSTLPPPQLAQAITLSDIAMISRSPGVGKMVSERIINELKNKALPSNAPHQSMPHFVSYSSETSSQAGTQHTGHQHSMDALAALTKLGFERDQATHALQEAIKAFEGETPSSALLIRHSLKLLSSHLK.

A domain I region spans residues 1 to 64 (MIGKLTGILD…EDAIRLFGFE (64 aa)). Residues 65 to 145 (TKVEQDWFCL…NAPHQSMPHF (81 aa)) are domain II. The interval 146–160 (VSYSSETSSQAGTQH) is flexible linker. Residues 161–217 (TGHQHSMDALAALTKLGFERDQATHALQEAIKAFEGETPSSALLIRHSLKLLSSHLK) are domain III.

Belongs to the RuvA family. Homotetramer. Forms an RuvA(8)-RuvB(12)-Holliday junction (HJ) complex. HJ DNA is sandwiched between 2 RuvA tetramers; dsDNA enters through RuvA and exits via RuvB. An RuvB hexamer assembles on each DNA strand where it exits the tetramer. Each RuvB hexamer is contacted by two RuvA subunits (via domain III) on 2 adjacent RuvB subunits; this complex drives branch migration. In the full resolvosome a probable DNA-RuvA(4)-RuvB(12)-RuvC(2) complex forms which resolves the HJ.

It localises to the cytoplasm. In terms of biological role, the RuvA-RuvB-RuvC complex processes Holliday junction (HJ) DNA during genetic recombination and DNA repair, while the RuvA-RuvB complex plays an important role in the rescue of blocked DNA replication forks via replication fork reversal (RFR). RuvA specifically binds to HJ cruciform DNA, conferring on it an open structure. The RuvB hexamer acts as an ATP-dependent pump, pulling dsDNA into and through the RuvAB complex. HJ branch migration allows RuvC to scan DNA until it finds its consensus sequence, where it cleaves and resolves the cruciform DNA. The polypeptide is Holliday junction branch migration complex subunit RuvA (Bartonella bacilliformis (strain ATCC 35685 / KC583 / Herrer 020/F12,63)).